A 31-amino-acid chain; its full sequence is Chassatide C6 (31 aa).

The cyclopeptide (Gly-Asn) cross-link spans 1-31; the sequence is GVIPCGESCVFIPCISSVIGCSCKNKVCYRN. Disulfide bonds link Cys-5–Cys-21, Cys-9–Cys-23, and Cys-14–Cys-28.

Post-translationally, this is a cyclic peptide. As to expression, expressed in fruit, pedicel, root and stem but not in leaf (at protein level).

Probably participates in a plant defense mechanism. This chain is Chassatide C6, found in Chassalia chartacea (Chassalia curviflora).